We begin with the raw amino-acid sequence, 384 residues long: S-adenosylmethionine synthase (384 aa).

Position 15 (histidine 15) interacts with ATP. Aspartate 17 is a Mg(2+) binding site. Glutamate 43 provides a ligand contact to K(+). 2 residues coordinate L-methionine: glutamate 56 and glutamine 99. The flexible loop stretch occupies residues 99–109 (QSPDINQGVDR). ATP is bound by residues 164-166 (DAK), 231-232 (RF), aspartate 240, 246-247 (RK), alanine 263, and lysine 267. L-methionine is bound at residue aspartate 240. Residue lysine 271 participates in L-methionine binding.

It belongs to the AdoMet synthase family. In terms of assembly, homotetramer; dimer of dimers. The cofactor is Mg(2+). K(+) is required as a cofactor.

The protein localises to the cytoplasm. The enzyme catalyses L-methionine + ATP + H2O = S-adenosyl-L-methionine + phosphate + diphosphate. The protein operates within amino-acid biosynthesis; S-adenosyl-L-methionine biosynthesis; S-adenosyl-L-methionine from L-methionine: step 1/1. Its function is as follows. Catalyzes the formation of S-adenosylmethionine (AdoMet) from methionine and ATP. The overall synthetic reaction is composed of two sequential steps, AdoMet formation and the subsequent tripolyphosphate hydrolysis which occurs prior to release of AdoMet from the enzyme. The sequence is that of S-adenosylmethionine synthase from Shewanella woodyi (strain ATCC 51908 / MS32).